A 4168-amino-acid polypeptide reads, in one-letter code: Centrosome-associated protein ALMS1 (4168 aa).

Over residues 1–29 (MEPEDLPWPGELEEEEEEEEEEEEEEEEA) the composition is skewed to acidic residues. The segment at 1–69 (MEPEDLPWPG…YGPQHLESID (69 aa)) is disordered. Positions 30-40 (AAAAAANVDDV) are enriched in low complexity. Residues 49 to 58 (EAGRELDSDS) show a composition bias toward basic and acidic residues. A Phosphoserine modification is found at S464. Repeat copies occupy residues 539–585 (QKTL…SIFY), 586–632 (QQGL…GTFY), 633–679 (QQEL…LFFY), 680–726 (RQTL…GIFY), 727–774 (QQEF…SILY), 775–821 (PQDL…LVFY), 822–871 (QQAL…SAFY), 872–918 (QQTL…IIFS), 919–965 (QQTL…SVFY), 966–1013 (QQEL…SIFY), 1014–1060 (QQEW…SVLY), 1061–1107 (PQVL…GIFY), 1108–1155 (QQTL…SIFH), 1156–1202 (QQAL…GIFY), 1203–1249 (QQTL…GIFY), 1250–1297 (QQVL…SIFY), 1298–1344 (QQSL…GVFY), 1345–1392 (QQVL…SIFY), 1393–1439 (QQSL…GSFY), 1440–1486 (QQVL…IVIY), 1487–1534 (KQAF…GSFY), 1535–1581 (QLAL…IVNY), 1582–1628 (KQAF…ITFY), 1629–1675 (RQAL…VIFY), 1676–1722 (QQTL…IVFY), 1723–1769 (QQAL…NISY), 1770–1816 (QQEL…IVSY), 1817–1861 (QREL…VISY), 1862–1906 (EQEL…SIFH), 1907–1951 (QQEL…SVIS), 1952–1999 (QQEL…LKIS), 2060–2105 (QQLP…NIFS), 2106–2152 (PQEL…DIFY), and 2153–2200 (QKDL…LVSE). Residues 539 to 2200 (QKTLADTHLT…HGENHKLVSE (1662 aa)) form a 34 X 47 AA approximate tandem repeat region. Disordered regions lie at residues 558 to 579 (PEPA…SHRG) and 606 to 625 (GLAD…YSHR). Polar residues-rich tracts occupy residues 564-574 (KTATPTVLSSS) and 609-622 (DQTT…STSY). Disordered stretches follow at residues 699–718 (SGPA…PHSH) and 735–769 (QTEE…QREK). The segment covering 705-715 (KTGTATVLSTP) has biased composition (polar residues). Residues 841–865 (SGPADGKTGTPAVTSTSSASSSLGE) are disordered. Disordered regions lie at residues 946–969 (GTPT…QQEL), 983–1007 (AIPG…SHRE), and 1027–1055 (LKVS…QREK). A compositionally biased stretch (polar residues) spans 989–1003 (DQKTVPTPTVPSGSF). S1189 carries the post-translational modification Phosphoserine. The interval 1221 to 1241 (VLGPADQKTGTPTPTSASYSH) is disordered. Residues 1228 to 1240 (KTGTPTPTSASYS) show a composition bias toward polar residues. The tract at residues 1786–1806 (SNVPGPADQKTGVSTVTSTSY) is disordered. Low complexity predominate over residues 1796–1806 (TGVSTVTSTSY). The residue at position 2143 (S2143) is a Phosphoserine. Disordered regions lie at residues 2456–2477 (ITDS…SSVD) and 2600–2621 (HPCA…NPSS). S2466 is subject to Phosphoserine. Residue S2632 is modified to Phosphoserine. 6 disordered regions span residues 2753 to 2828 (HFTE…STRA), 2892 to 2912 (KAPR…QHQD), 3283 to 3310 (RQIP…AIAP), 3389 to 3426 (EAAQ…MKNL), 3566 to 3594 (QVRD…TTQH), and 3643 to 3704 (SLQV…HRAG). Residues 2754-2766 (FTEEQNPPRDLKQ) are compositionally biased toward basic and acidic residues. Over residues 2767-2779 (KTSSPSSFKMHSN) the composition is skewed to polar residues. 2 stretches are compositionally biased toward basic and acidic residues: residues 2780-2793 (SQDK…EGRR) and 2800-2816 (VDFE…ERSD). Residue S2805 is modified to Phosphoserine. The span at 2817 to 2828 (FTGSHSEPSTRA) shows a compositional bias: polar residues. The segment covering 3294 to 3305 (DTTVESSHSGSN) has biased composition (polar residues). Positions 3392 to 3404 (QAKEKESLQKDTA) are enriched in basic and acidic residues. The span at 3405–3416 (DSSAAAAAEHSA) shows a compositional bias: low complexity. Composition is skewed to basic and acidic residues over residues 3649-3664 (STHD…KEWS) and 3680-3694 (KSLE…ELKK). The segment covering 3695-3704 (SKVLSHHRAG) has biased composition (basic residues). An ALMS motif region spans residues 4036–4167 (TLQESLQFHR…NQLLGRKVPW (132 aa)).

The protein belongs to the ALMS1 family. Expressed in all tissues tested including adipose and pancreas. Expressed by beta-cells of the islets in the pancreas (at protein level).

It is found in the cytoplasm. The protein localises to the cytoskeleton. It localises to the microtubule organizing center. The protein resides in the centrosome. Its subcellular location is the cilium basal body. It is found in the spindle pole. Involved in PCM1-dependent intracellular transport. Required, directly or indirectly, for the localization of NCAPD2 to the proximal ends of centrioles. Required for proper formation and/or maintenance of primary cilia (PC), microtubule-based structures that protrude from the surface of epithelial cells. The polypeptide is Centrosome-associated protein ALMS1 (ALMS1) (Homo sapiens (Human)).